A 393-amino-acid chain; its full sequence is Formate-dependent phosphoribosylglycinamide formyltransferase (393 aa).

N(1)-(5-phospho-beta-D-ribosyl)glycinamide contacts are provided by residues 22-23 (EL) and Glu-82. ATP-binding positions include Arg-114, Lys-155, 160–165 (SSGKGQ), 195–198 (EGFV), and Glu-203. The region spanning 119–308 (RLAAEELGLP…EFALHVRAFT (190 aa)) is the ATP-grasp domain. The Mg(2+) site is built by Glu-267 and Glu-279. Residues Asp-286, Lys-356, and 363–364 (RR) each bind N(1)-(5-phospho-beta-D-ribosyl)glycinamide.

The protein belongs to the PurK/PurT family. Homodimer.

It carries out the reaction N(1)-(5-phospho-beta-D-ribosyl)glycinamide + formate + ATP = N(2)-formyl-N(1)-(5-phospho-beta-D-ribosyl)glycinamide + ADP + phosphate + H(+). The protein operates within purine metabolism; IMP biosynthesis via de novo pathway; N(2)-formyl-N(1)-(5-phospho-D-ribosyl)glycinamide from N(1)-(5-phospho-D-ribosyl)glycinamide (formate route): step 1/1. Functionally, involved in the de novo purine biosynthesis. Catalyzes the transfer of formate to 5-phospho-ribosyl-glycinamide (GAR), producing 5-phospho-ribosyl-N-formylglycinamide (FGAR). Formate is provided by PurU via hydrolysis of 10-formyl-tetrahydrofolate. The polypeptide is Formate-dependent phosphoribosylglycinamide formyltransferase (Vibrio cholerae serotype O1 (strain M66-2)).